Reading from the N-terminus, the 529-residue chain is Bifunctional purine biosynthesis protein PurH (529 aa).

The MGS-like domain occupies 2–149 (TDLHPVRRAL…KNHAFVNVVV (148 aa)).

It belongs to the PurH family.

The catalysed reaction is (6R)-10-formyltetrahydrofolate + 5-amino-1-(5-phospho-beta-D-ribosyl)imidazole-4-carboxamide = 5-formamido-1-(5-phospho-D-ribosyl)imidazole-4-carboxamide + (6S)-5,6,7,8-tetrahydrofolate. It catalyses the reaction IMP + H2O = 5-formamido-1-(5-phospho-D-ribosyl)imidazole-4-carboxamide. It participates in purine metabolism; IMP biosynthesis via de novo pathway; 5-formamido-1-(5-phospho-D-ribosyl)imidazole-4-carboxamide from 5-amino-1-(5-phospho-D-ribosyl)imidazole-4-carboxamide (10-formyl THF route): step 1/1. The protein operates within purine metabolism; IMP biosynthesis via de novo pathway; IMP from 5-formamido-1-(5-phospho-D-ribosyl)imidazole-4-carboxamide: step 1/1. This Ruegeria sp. (strain TM1040) (Silicibacter sp.) protein is Bifunctional purine biosynthesis protein PurH.